A 193-amino-acid polypeptide reads, in one-letter code: Thioredoxin reductase-like selenoprotein T1b (193 aa).

Residues 1–21 (METRCLYLLLVCVLSVNHATA) form the signal peptide. A cross-link (cysteinyl-selenocysteine (Cys-Sec)) is located at residues 44-47 (CVSU). Position 47 (Sec47) is a non-standard amino acid, selenocysteine.

It belongs to the SelWTH family. Selenoprotein T subfamily. Post-translationally, may contain a selenide-sulfide bond between Cys-44 and Sec-47. This bond is speculated to serve as redox-active pair. As to expression, widely expressed in the embryo. High level in embryonic blood at 24 hours post-fertilization (hpf).

The protein localises to the endoplasmic reticulum membrane. The enzyme catalyses [thioredoxin]-dithiol + NADP(+) = [thioredoxin]-disulfide + NADPH + H(+). Selenoprotein with thioredoxin reductase-like oxidoreductase activity. This Danio rerio (Zebrafish) protein is Thioredoxin reductase-like selenoprotein T1b.